Consider the following 121-residue polypeptide: Small ribosomal subunit protein uS13 (121 aa).

The disordered stretch occupies residues 92–121 (RKGLPCRGQRTRTNARTRKGPRKAAQSLKK).

The protein belongs to the universal ribosomal protein uS13 family. As to quaternary structure, part of the 30S ribosomal subunit. Forms a loose heterodimer with protein S19. Forms two bridges to the 50S subunit in the 70S ribosome.

Functionally, located at the top of the head of the 30S subunit, it contacts several helices of the 16S rRNA. In the 70S ribosome it contacts the 23S rRNA (bridge B1a) and protein L5 of the 50S subunit (bridge B1b), connecting the 2 subunits; these bridges are implicated in subunit movement. Contacts the tRNAs in the A and P-sites. This chain is Small ribosomal subunit protein uS13, found in Janthinobacterium sp. (strain Marseille) (Minibacterium massiliensis).